The sequence spans 117 residues: Prefoldin subunit beta (117 aa).

It belongs to the prefoldin subunit beta family. Heterohexamer of two alpha and four beta subunits.

The protein localises to the cytoplasm. In terms of biological role, molecular chaperone capable of stabilizing a range of proteins. Seems to fulfill an ATP-independent, HSP70-like function in archaeal de novo protein folding. This chain is Prefoldin subunit beta (pfdB), found in Pyrococcus abyssi (strain GE5 / Orsay).